Here is a 459-residue protein sequence, read N- to C-terminus: MLKLYNSLTRQKEEFKPLQPGKVGMYVCGITIYDLCHIGHGRTFVAFDMIVRYLRYSGYDVNFLRNITDVDDKIIKRAAENKESCDSLTERLIGEMHKDFDSLNMKRPDFEPRATLHMAEIIEMVEKLIEKEHAYVSSNGDVLFSVSSFPEYGRLSGQNLEQLQAGARVEVEDSKRDPMDFVLWKMSKPGEPTWESPWGPGRPGWHIECSAMNSKHLGQHFDIHGGGSDLQFPHHENEIAQSCCAHNTPYVNYWMHTGMVMVDKEKMSKSLNNFFTIRDVLAHYDAATIRYFLLSGHYRSQLNYSEDNLKQAKSALARLYTALKDLDLTVEPAAAENFVSKFKQAMDDDFNTPEAYSVLFDMVREVNRLKVTDLAQASALAVRLKELAGVLGILEQDVDSFFKGESNDAEVAEVEALIAERNRARAEKDWPAADIARDGLNALGVILEDGPEGTTWRKK.

Residue C28 coordinates Zn(2+). The 'HIGH' region motif lies at 30–40; sequence ITIYDLCHIGH. Residues C209, H234, and E238 each contribute to the Zn(2+) site. Positions 266-270 match the 'KMSKS' region motif; it reads KMSKS. K269 serves as a coordination point for ATP.

It belongs to the class-I aminoacyl-tRNA synthetase family. In terms of assembly, monomer. The cofactor is Zn(2+).

It localises to the cytoplasm. The catalysed reaction is tRNA(Cys) + L-cysteine + ATP = L-cysteinyl-tRNA(Cys) + AMP + diphosphate. This Shewanella woodyi (strain ATCC 51908 / MS32) protein is Cysteine--tRNA ligase.